Reading from the N-terminus, the 1107-residue chain is Rho GTPase-activating protein 45 (1107 aa).

The segment at 1–99 (MFSRKKRELM…SPPESGEGPF (99 aa)) is disordered. A compositionally biased stretch (low complexity) spans 37–55 (DSSNDLASSPPSNSSPVSS). Polar residues predominate over residues 56 to 66 (GTLKRPSSLSR). Coiled coils occupy residues 103 to 132 (EDISQLLGDVARFAERLEKLRDVVQDEELK) and 363 to 485 (NMRR…QSDQ). The F-BAR domain occupies 261-524 (EDVDVILQRS…SSKLYDLGQQ (264 aa)). Basic and acidic residues-rich tracts occupy residues 414 to 423 (NATRAEEEQS), 434 to 444 (RRAEEEAKNRA), and 573 to 588 (ENKEISGEERGVERRG). Disordered stretches follow at residues 414-444 (NATRAEEEQSHSGTRSLDKKRRAEEEAKNRA) and 564-595 (FNSQDIPSSENKEISGEERGVERRGGRGHQVH). The Phorbol-ester/DAG-type zinc finger occupies 671–716 (THRLRKLRTPSKCRECNSYVYFQGAECEECSLACHKKCLETLAIQC). The region spanning 730–942 (RDFSETALRS…TLIIFYSTIF (213 aa)) is the Rho-GAP domain. Residues 981 to 1036 (LTPEYQIPVFKEPGASTVESDSESDGAEDIPGTWKPQTTRGHLTKEASVTSAEDIP) are disordered. A compositionally biased stretch (polar residues) spans 1015–1031 (KPQTTRGHLTKEASVTS).

The protein resides in the cytoplasm. The protein localises to the cell projection. It localises to the ruffle membrane. Functionally, contains a GTPase activator for the Rho-type GTPases (RhoGAP) domain that would be able to negatively regulate the actin cytoskeleton as well as cell spreading. However, also contains N-terminally a BAR-domin which is able to play an autoinhibitory effect on this RhoGAP activity. This chain is Rho GTPase-activating protein 45, found in Xenopus laevis (African clawed frog).